The chain runs to 610 residues: Elongation factor 4 (610 aa).

Positions 11–193 (EKIRNFSIIA…QIVEKVPAPT (183 aa)) constitute a tr-type G domain. GTP is bound by residues 23–28 (DHGKST) and 140–143 (NKID).

Belongs to the TRAFAC class translation factor GTPase superfamily. Classic translation factor GTPase family. LepA subfamily.

It is found in the cell membrane. The enzyme catalyses GTP + H2O = GDP + phosphate + H(+). Its function is as follows. Required for accurate and efficient protein synthesis under certain stress conditions. May act as a fidelity factor of the translation reaction, by catalyzing a one-codon backward translocation of tRNAs on improperly translocated ribosomes. Back-translocation proceeds from a post-translocation (POST) complex to a pre-translocation (PRE) complex, thus giving elongation factor G a second chance to translocate the tRNAs correctly. Binds to ribosomes in a GTP-dependent manner. In Streptococcus pyogenes serotype M6 (strain ATCC BAA-946 / MGAS10394), this protein is Elongation factor 4.